Here is a 162-residue protein sequence, read N- to C-terminus: Calcium vector protein (162 aa).

Position 2 is an N-acetylalanine (alanine 2). EF-hand domains lie at 12–47 (EEKD…LGQT), 49–84 (TKRE…KWVR), 86–121 (DDEE…VGEE), and 123–158 (LTDA…SKNA). Position 96 is an N6,N6,N6-trimethyllysine (lysine 96). 4 residues coordinate Ca(2+): aspartate 99, asparagine 101, aspartate 103, and glutamate 110. Lysine 117 carries the N6,N6,N6-trimethyllysine modification. Residues aspartate 136, aspartate 138, asparagine 140, and glutamate 147 each contribute to the Ca(2+) site.

The protein resides in the cytoplasm. The exact function of this protein is not yet known. It interacts with CAVPT, a protein also of unknown function, in a calcium-dependent way. This protein binds two calcium ions. The protein is Calcium vector protein of Branchiostoma lanceolatum (Common lancelet).